A 495-amino-acid chain; its full sequence is Cytochrome P450 2B15 (495 aa).

Ser129 is subject to Phosphoserine; by PKA. Cys437 is a heme binding site.

This sequence belongs to the cytochrome P450 family. Heme serves as cofactor.

It localises to the endoplasmic reticulum membrane. The protein localises to the microsome membrane. It carries out the reaction an organic molecule + reduced [NADPH--hemoprotein reductase] + O2 = an alcohol + oxidized [NADPH--hemoprotein reductase] + H2O + H(+). Functionally, cytochromes P450 are a group of heme-thiolate monooxygenases. In liver microsomes, this enzyme is involved in an NADPH-dependent electron transport pathway. It oxidizes a variety of structurally unrelated compounds, including steroids, fatty acids, and xenobiotics. The chain is Cytochrome P450 2B15 (Cyp2b15) from Rattus norvegicus (Rat).